Reading from the N-terminus, the 124-residue chain is Fluoride-specific ion channel FluC (124 aa).

4 helical membrane passes run 4–24, 35–55, 62–82, and 95–115; these read VLFV…ISLL, FGTL…FALG, PEFK…FSTF, and LVKA…VVYL. Na(+) contacts are provided by Gly-74 and Thr-77.

The protein belongs to the fluoride channel Fluc/FEX (TC 1.A.43) family.

The protein resides in the cell inner membrane. The catalysed reaction is fluoride(in) = fluoride(out). Its activity is regulated as follows. Na(+) is not transported, but it plays an essential structural role and its presence is essential for fluoride channel function. Functionally, fluoride-specific ion channel. Important for reducing fluoride concentration in the cell, thus reducing its toxicity. This chain is Fluoride-specific ion channel FluC, found in Shewanella pealeana (strain ATCC 700345 / ANG-SQ1).